The sequence spans 325 residues: Undecaprenyl-phosphate 4-deoxy-4-formamido-L-arabinose transferase (325 aa).

The next 2 membrane-spanning stretches (helical) occupy residues 236–256 (LSIF…LLIL) and 270–290 (VFTL…GMGL).

The protein belongs to the glycosyltransferase 2 family.

Its subcellular location is the cell inner membrane. It carries out the reaction UDP-4-deoxy-4-formamido-beta-L-arabinose + di-trans,octa-cis-undecaprenyl phosphate = 4-deoxy-4-formamido-alpha-L-arabinopyranosyl di-trans,octa-cis-undecaprenyl phosphate + UDP. Its pathway is glycolipid biosynthesis; 4-amino-4-deoxy-alpha-L-arabinose undecaprenyl phosphate biosynthesis; 4-amino-4-deoxy-alpha-L-arabinose undecaprenyl phosphate from UDP-4-deoxy-4-formamido-beta-L-arabinose and undecaprenyl phosphate: step 1/2. It functions in the pathway bacterial outer membrane biogenesis; lipopolysaccharide biosynthesis. Its function is as follows. Catalyzes the transfer of 4-deoxy-4-formamido-L-arabinose from UDP to undecaprenyl phosphate. The modified arabinose is attached to lipid A and is required for resistance to polymyxin and cationic antimicrobial peptides. This chain is Undecaprenyl-phosphate 4-deoxy-4-formamido-L-arabinose transferase, found in Edwardsiella ictaluri (strain 93-146).